A 31-amino-acid chain; its full sequence is Photosystem II reaction center protein T (31 aa).

The chain crosses the membrane as a helical span at residues 3-23 (SFAYILILAFSIGTLFFAIAL).

This sequence belongs to the PsbT family. As to quaternary structure, PSII is composed of 1 copy each of membrane proteins PsbA, PsbB, PsbC, PsbD, PsbE, PsbF, PsbH, PsbI, PsbJ, PsbK, PsbL, PsbM, PsbT, PsbX, PsbY, PsbZ, Psb30/Ycf12, peripheral proteins PsbO, CyanoQ (PsbQ), PsbU, PsbV and a large number of cofactors. It forms dimeric complexes.

The protein localises to the cellular thylakoid membrane. Found at the monomer-monomer interface of the photosystem II (PS II) dimer, plays a role in assembly and dimerization of PSII. PSII is a light-driven water plastoquinone oxidoreductase, using light energy to abstract electrons from H(2)O, generating a proton gradient subsequently used for ATP formation. The sequence is that of Photosystem II reaction center protein T from Synechococcus sp. (strain RCC307).